A 68-amino-acid polypeptide reads, in one-letter code: MAVPQNRVTRSRRNMRRSHDALVASNPAECPNCGELKRPHHVCGACGHYDSREVVAVTAETDLDEDAA.

Residues 1–20 (MAVPQNRVTRSRRNMRRSHD) form a disordered region.

The protein belongs to the bacterial ribosomal protein bL32 family.

The chain is Large ribosomal subunit protein bL32 from Cereibacter sphaeroides (strain ATCC 17029 / ATH 2.4.9) (Rhodobacter sphaeroides).